The chain runs to 338 residues: Flap endonuclease 1 (338 aa).

Residues 1–98 are N-domain; the sequence is MGTDIGDLLQ…ETLNRRKEVR (98 aa). The Mg(2+) site is built by D27, D80, E152, E154, D173, D175, and D236. Positions 116–257 are I-domain; it reads AAYKYAQASS…TALKLIKKHG (142 aa). The segment at 330–338 is interaction with PCNA; the sequence is RQQTLDQWF.

This sequence belongs to the XPG/RAD2 endonuclease family. FEN1 subfamily. Interacts with PCNA. PCNA stimulates the nuclease activity without altering cleavage specificity. The cofactor is Mg(2+).

Its function is as follows. Structure-specific nuclease with 5'-flap endonuclease and 5'-3' exonuclease activities involved in DNA replication and repair. During DNA replication, cleaves the 5'-overhanging flap structure that is generated by displacement synthesis when DNA polymerase encounters the 5'-end of a downstream Okazaki fragment. Binds the unpaired 3'-DNA end and kinks the DNA to facilitate 5' cleavage specificity. Cleaves one nucleotide into the double-stranded DNA from the junction in flap DNA, leaving a nick for ligation. Also involved in the base excision repair (BER) pathway. Acts as a genome stabilization factor that prevents flaps from equilibrating into structures that lead to duplications and deletions. Also possesses 5'-3' exonuclease activity on nicked or gapped double-stranded DNA. The polypeptide is Flap endonuclease 1 (Methanosarcina barkeri (strain Fusaro / DSM 804)).